The following is a 306-amino-acid chain: Prophage bactoprenol glucosyl transferase homolog (306 aa).

Over 1 to 227 the chain is Cytoplasmic; the sequence is MKISLVVPVF…ITSFSTFPLR (227 aa). The chain crosses the membrane as a helical span at residues 228 to 248; sequence IWTYIGLVVASVAFIYGAWMI. Over 249-262 the chain is Periplasmic; it reads LDTIIFGNAVRGYP. A helical transmembrane segment spans residues 263-283; the sequence is SLLVSILFLGGIQMIGIGVLG. Residues 284-306 lie on the Cytoplasmic side of the membrane; the sequence is EYIGRTYIETKKRPKYIIKRVKK.

It belongs to the glycosyltransferase 2 family. GtrB subfamily.

It is found in the cell inner membrane. In terms of biological role, involved in O antigen modification. Catalyzes the transfer of the glucose residue from UDP-glucose to a lipid carrier. This is Prophage bactoprenol glucosyl transferase homolog (yfdH) from Escherichia coli (strain K12).